We begin with the raw amino-acid sequence, 429 residues long: Glutamate-1-semialdehyde 2,1-aminomutase (429 aa).

An N6-(pyridoxal phosphate)lysine modification is found at lysine 264.

Belongs to the class-III pyridoxal-phosphate-dependent aminotransferase family. HemL subfamily. Homodimer. Pyridoxal 5'-phosphate serves as cofactor.

The protein resides in the cytoplasm. It catalyses the reaction (S)-4-amino-5-oxopentanoate = 5-aminolevulinate. The protein operates within porphyrin-containing compound metabolism; protoporphyrin-IX biosynthesis; 5-aminolevulinate from L-glutamyl-tRNA(Glu): step 2/2. This is Glutamate-1-semialdehyde 2,1-aminomutase from Campylobacter curvus (strain 525.92).